An 82-amino-acid polypeptide reads, in one-letter code: Three-finger toxin MicTx3 (82 aa).

An N-terminal signal peptide occupies residues methionine 1–threonine 21. Disulfide bonds link cysteine 24–cysteine 44, cysteine 38–cysteine 59, cysteine 63–cysteine 74, and cysteine 75–cysteine 80.

Belongs to the three-finger toxin family. Short-chain subfamily. In terms of tissue distribution, expressed by the venom gland.

The protein localises to the secreted. Has been described to inhibit nicotinic acetylcholine receptor (nAChR) alpha-7/CHRNA7 subunits and to bind acetylcholine binding protein (AChBP) (Kd=29.5 nM). The chain is Three-finger toxin MicTx3 from Micrurus corallinus (Brazilian coral snake).